Reading from the N-terminus, the 1091-residue chain is AP-3 complex subunit beta-1 (1091 aa).

2 disordered regions span residues 1–32 (MSGNSFAYSEQAGGGEATELGQEATSTVSPSG) and 267–290 (EDNEKNFYESDDEQKEKTDQKKKP). Residues 267–288 (EDNEKNFYESDDEQKEKTDQKK) show a composition bias toward basic and acidic residues. Phosphoserine occurs at positions 276 and 609. Positions 664 to 807 (AGKAKKENPA…EKEKKTKEDR (144 aa)) are disordered. Residues 667–678 (AKKENPARKFYS) are compositionally biased toward basic and acidic residues. Composition is skewed to acidic residues over residues 679-695 (DSEEEEDSSDSSSDSES) and 703-718 (EQDEEGDSSEDSSEDS). Over residues 719 to 736 (SSEHRSDSESVSEVGDKR) the composition is skewed to basic and acidic residues. Phosphoserine is present on residues Ser-748 and Ser-750. Low complexity predominate over residues 763–775 (SDSSSTDSSSVEE). Positions 776 to 789 (SSSDSESESESESE) are enriched in acidic residues. Positions 790-807 (SESKKVTMEKEKKTKEDR) are enriched in basic and acidic residues.

It belongs to the adaptor complexes large subunit family. In terms of assembly, adaptor protein complex 3 (AP-3) is a heterotetramer composed of two large adaptins (delta-type subunit AP3D1 and beta-type subunit AP3B1 or AP3B2), a medium adaptin (mu-type subunit AP3M1 or AP3M2) and a small adaptin (sigma-type subunit APS1 or AP3S2). AP-3 associates with the BLOC-1 complex. Interacts with KIF3A; interaction is direct; interaction is impaired by pyrophosphorylation of AP3B1. In terms of processing, phosphorylated on serine residues. Pyrophosphorylation by 5-diphosphoinositol pentakisphosphate (5-IP7) impairs interaction with KIF3A. Serine pyrophosphorylation is achieved by Mg(2+)-dependent, but enzyme independent transfer of a beta-phosphate from a inositol pyrophosphate to a pre-phosphorylated serine residue.

The protein resides in the cytoplasmic vesicle. It is found in the clathrin-coated vesicle membrane. The protein localises to the golgi apparatus. Functionally, subunit of non-clathrin- and clathrin-associated adaptor protein complex 3 (AP-3) that plays a role in protein sorting in the late-Golgi/trans-Golgi network (TGN) and/or endosomes. The AP complexes mediate both the recruitment of clathrin to membranes and the recognition of sorting signals within the cytosolic tails of transmembrane cargo molecules. AP-3 appears to be involved in the sorting of a subset of transmembrane proteins targeted to lysosomes and lysosome-related organelles. In concert with the BLOC-1 complex, AP-3 is required to target cargos into vesicles assembled at cell bodies for delivery into neurites and nerve terminals. In Canis lupus familiaris (Dog), this protein is AP-3 complex subunit beta-1 (AP3B1).